The following is a 382-amino-acid chain: Flap endonuclease 1 (382 aa).

The N-domain stretch occupies residues 1-104 (MGILGLSKLI…GELAKRAERR (104 aa)). Asp34 is a binding site for Mg(2+). 2 residues coordinate DNA: Arg47 and Arg70. Asp86 provides a ligand contact to Mg(2+). The interval 95–118 (GELAKRAERREDAQKALEKATEAG) is disordered. Basic and acidic residues predominate over residues 96 to 115 (ELAKRAERREDAQKALEKAT). Residues 122-253 (DMDKFNRRLV…KRATELMNSY (132 aa)) are I-domain. Mg(2+) contacts are provided by Glu158, Glu160, Asp179, and Asp181. Glu158 serves as a coordination point for DNA. DNA-binding residues include Gly231 and Asp233. Asp233 is a binding site for Mg(2+). Residues 336–344 (TQGRLDSFF) form an interaction with PCNA region. The disordered stretch occupies residues 353–382 (TTPKRKADDKNNVQQKKSKTAGNTKGKRPK). Residues 364–375 (NVQQKKSKTAGN) show a composition bias toward polar residues.

Belongs to the XPG/RAD2 endonuclease family. FEN1 subfamily. In terms of assembly, interacts with PCNA. Three molecules of FEN1 bind to one PCNA trimer with each molecule binding to one PCNA monomer. PCNA stimulates the nuclease activity without altering cleavage specificity. Mg(2+) is required as a cofactor. In terms of processing, phosphorylated. Phosphorylation upon DNA damage induces relocalization to the nuclear plasma.

The protein localises to the nucleus. Its subcellular location is the nucleolus. It localises to the nucleoplasm. The protein resides in the mitochondrion. Functionally, structure-specific nuclease with 5'-flap endonuclease and 5'-3' exonuclease activities involved in DNA replication and repair. During DNA replication, cleaves the 5'-overhanging flap structure that is generated by displacement synthesis when DNA polymerase encounters the 5'-end of a downstream Okazaki fragment. It enters the flap from the 5'-end and then tracks to cleave the flap base, leaving a nick for ligation. Also involved in the long patch base excision repair (LP-BER) pathway, by cleaving within the apurinic/apyrimidinic (AP) site-terminated flap. Acts as a genome stabilization factor that prevents flaps from equilibrating into structures that lead to duplications and deletions. Also possesses 5'-3' exonuclease activity on nicked or gapped double-stranded DNA, and exhibits RNase H activity. Also involved in replication and repair of rDNA and in repairing mitochondrial DNA. The sequence is that of Flap endonuclease 1 from Glossina morsitans morsitans (Savannah tsetse fly).